The primary structure comprises 730 residues: Protein groucho (730 aa).

The tract at residues glutamine 144 to asparagine 411 is disordered. Positions alanine 198–lysine 233 are enriched in basic and acidic residues. A phosphoserine mark is found at serine 205, serine 207, and serine 218. The interval valine 206 to serine 267 is CCN domain. The Nuclear localization signal motif lies at lysine 227–lysine 230. The residue at position 242 (serine 242) is a Phosphoserine; by CK2. Positions methionine 254–lysine 283 are enriched in basic and acidic residues. At serine 258 the chain carries Phosphoserine; by CDC2. The segment at asparagine 262–alanine 425 is binding to basic helix-loop-helix domain. The residue at position 267 (serine 267) is a Phosphoserine. 3 stretches are compositionally biased toward low complexity: residues serine 296–serine 308, alanine 322–proline 345, and tyrosine 353–alanine 362. Phosphothreonine is present on residues threonine 326 and threonine 328. Pro residues predominate over residues glutamine 366–tyrosine 382. 7 WD repeats span residues serine 442–proline 480, glutamine 488–lysine 527, serine 532–glutamine 571, glycine 574–glutamine 613, aspartate 615–leucine 654, leucine 656–glutamine 695, and lysine 697–tyrosine 730.

The protein belongs to the WD repeat Groucho/TLE family. Forms a complex with the hairy/Enhancer of split/deadpan family of basic helix-loop-helix proteins in order to repress transcription. Its activity in regulating transcription depends on other proteins as it lacks a DNA-binding motif. Interacts with hairy/hry (via WRPW motif). In terms of processing, ubiquitinated by XIAP/BIRC4. Ubiquitinated by hyd in response to Wnt signaling, leading to degradation by the proteasome.

It localises to the nucleus. Transcriptional corepressor that regulates transcription when recruited to specific target DNA by hairy-related bHLH proteins. Maternally required for neurogenesis; in the segregation of the neuroectoderm. Directly or indirectly interacts with Notch and Delta. In Drosophila melanogaster (Fruit fly), this protein is Protein groucho (gro).